A 90-amino-acid polypeptide reads, in one-letter code: Small ribosomal subunit protein bS16 (90 aa).

The protein belongs to the bacterial ribosomal protein bS16 family.

The polypeptide is Small ribosomal subunit protein bS16 (Shouchella clausii (strain KSM-K16) (Alkalihalobacillus clausii)).